A 417-amino-acid chain; its full sequence is Methyltransferase/ribosomally synthesized cyclic peptide omphalotin A precursor ophMA (417 aa).

The interval 1 to 251 (METSTQTKAG…GVSTFYIPPK (251 aa)) is methyltransferase domain. Catalysis depends on residues R72, Y76, and Y98. The S-adenosyl-L-methionine site is built by Y98, H100, V103, A130, Q172, A213, S244, and T245. The segment at 252-378 (ARKASNLDII…WAIRCAMKNM (127 aa)) is clasp domain. Residues 379-399 (PSSLLDAARESGEEASQNGFP) form a precursor leader region. N-methylvaline occurs at positions 401, 403, and 404. G405 is subject to N-methylglycine. N-methylvaline is present on V406. At I407 the chain carries N-methylisoleucine. G408 is modified (N-methylglycine). I410 is modified (N-methylisoleucine). G411 is subject to N-methylglycine. Position 413 is an N-methylvaline (V413).

This sequence in the N-terminal section; belongs to the precorrin methyltransferase family. As to quaternary structure, homodimer. Post-translationally, ophMA automethylates at Val-401, Val-403, Val-404, Gly-405, Val-406, Ile-407, Gly-408, Ile-410, Gly-411 and Val-413 before being processed by the prolyloligopeptidase ophP which likely forms a peptidyl ester upon removal of the follower propeptide, which then undergoes macrocyclization with the N-terminus of the modified core peptide. Peptide backbone alpha-N-methylations change the physicochemical properties of amide bonds to provide structural constraints and other favorable characteristics including biological membrane permeability to peptides.

The protein operates within mycotoxin biosynthesis. In terms of biological role, fusion protein of the methyltransferase ophM and the omphalotin core peptide; part of the gene cluster that mediates the biosynthesis of omphalotin A, a highly methylated cyclic dodecapeptide with nematodicidal activity. Omphalotin A derives from the C-terminus of the ophMA protein, and it is the ophMA protein that methylates its own C-terminus using S-adenosyl methionine (SAM). The C-terminus is subsequently cleaved off and macrocyclized by the prolyloligopeptidase ophP to give the final product. This Omphalotus olearius (Jack o'lantern) protein is Methyltransferase/ribosomally synthesized cyclic peptide omphalotin A precursor ophMA.